An 839-amino-acid polypeptide reads, in one-letter code: ABC transporter A family member 7 (839 aa).

The next 7 helical transmembrane spans lie at 30–50 (GVQIAIPMALVIVLVILKLWI), 238–258 (IASLLGGSFFPFALSFVLPLF), 286–306 (IMTFIFNFLTYVVIVSVISLI), 321–341 (FALFLLLFLWGLSMVSFAFFL), 352–372 (SIFGYFFVMVMVNLNSTLSLF), 378–398 (VFYYWVPILAFSRGISTLCGL), and 419–439 (ILFWLFIDTIVYLTLAVYLDK). Residues 525-756 (LIVQGLRKQF…FGDGYSVRID (232 aa)) enclose the ABC transporter domain. 559–566 (GPNGAGKT) is an ATP binding site.

It belongs to the ABC transporter superfamily. ABCA family.

The protein resides in the membrane. In Dictyostelium discoideum (Social amoeba), this protein is ABC transporter A family member 7 (abcA7).